The sequence spans 281 residues: Urease accessory protein UreD (281 aa).

The segment at 1–25 (MLNTLEPQPCETDALSPRLQRSTGS) is disordered.

It belongs to the UreD family. In terms of assembly, ureD, UreF and UreG form a complex that acts as a GTP-hydrolysis-dependent molecular chaperone, activating the urease apoprotein by helping to assemble the nickel containing metallocenter of UreC. The UreE protein probably delivers the nickel.

It localises to the cytoplasm. Its function is as follows. Required for maturation of urease via the functional incorporation of the urease nickel metallocenter. The protein is Urease accessory protein UreD of Dinoroseobacter shibae (strain DSM 16493 / NCIMB 14021 / DFL 12).